Reading from the N-terminus, the 87-residue chain is Small ribosomal subunit protein bS20 (87 aa).

The disordered stretch occupies residues 1–29; the sequence is MANTAQARKRARQAVKQNAHNSSQRSTLR. Positions 20–29 are enriched in polar residues; that stretch reads HNSSQRSTLR.

The protein belongs to the bacterial ribosomal protein bS20 family.

In terms of biological role, binds directly to 16S ribosomal RNA. This chain is Small ribosomal subunit protein bS20, found in Herminiimonas arsenicoxydans.